The following is a 500-amino-acid chain: Melanopsin (500 aa).

The Extracellular portion of the chain corresponds to 1 to 65 (MSHHSSWRGH…TVDVPDHAHY (65 aa)). N-linked (GlcNAc...) asparagine glycosylation occurs at Asn-18. The chain crosses the membrane as a helical span at residues 66–86 (IIGAVILIVGITGVIGNALVI). At 87–101 (YVFCRSRTLRTAGNM) the chain is on the cytoplasmic side. Residues 102–122 (FVVNLAVADFFMSLTQSPVFF) traverse the membrane as a helical segment. Topologically, residues 123–138 (AASLHRRWIFGERICE) are extracellular. Cys-137 and Cys-215 are oxidised to a cystine. A helical membrane pass occupies residues 139-159 (LYAFCGALFGICSMMTLTAIA). At 160 to 182 (ADRCLAITQPLALVGNVSRRKAG) the chain is on the cytoplasmic side. Residues 183 to 203 (AVLAVVWLYSLGWSLPPFFGW) traverse the membrane as a helical segment. Residues 204–232 (SAYVPEGLQTSCSWDYMTFTPSVRAYTIL) lie on the Extracellular side of the membrane. Residues 233 to 253 (LFIFVFFIPLGIIVSCYVGIF) traverse the membrane as a helical segment. The Cytoplasmic portion of the chain corresponds to 254 to 286 (QAIRAMGKEIRELDCGETQKVYERMQNEWKMAK). The chain crosses the membrane as a helical span at residues 287-307 (IALLVILLFVISWSPYSVVAL). Residues 308-322 (TATAGYSHLLTPYMN) are Extracellular-facing. Residues 323–343 (SVPAVIAKASAIHNPIIYAIT) form a helical membrane-spanning segment. Residue Lys-330 is modified to N6-(retinylidene)lysine. The Cytoplasmic segment spans residues 344–500 (HPKYRAAIAR…DGKALLLGGN (157 aa)). Disordered regions lie at residues 406–428 (GKKR…ADGS), 448–470 (VILS…AHKV), and 481–500 (ETDS…LGGN). Polar residues-rich tracts occupy residues 411 to 428 (SSAS…ADGS) and 448 to 462 (VILS…ASGQ).

The protein belongs to the G-protein coupled receptor 1 family. Opsin subfamily. In terms of tissue distribution, expressed in a subset of retinal horizontal cells as well as in retinal ganglion cells.

It localises to the cell membrane. Photoreceptor implicated in non-image-forming responses to light. In Rutilus rutilus (Roach), this protein is Melanopsin (opn4).